A 211-amino-acid polypeptide reads, in one-letter code: 3-demethoxyubiquinol 3-hydroxylase (211 aa).

The Fe cation site is built by glutamate 60, glutamate 90, histidine 93, glutamate 142, glutamate 174, and histidine 177.

This sequence belongs to the COQ7 family. Requires Fe cation as cofactor.

The protein resides in the cell membrane. The catalysed reaction is a 5-methoxy-2-methyl-3-(all-trans-polyprenyl)benzene-1,4-diol + AH2 + O2 = a 3-demethylubiquinol + A + H2O. It participates in cofactor biosynthesis; ubiquinone biosynthesis. Its function is as follows. Catalyzes the hydroxylation of 2-nonaprenyl-3-methyl-6-methoxy-1,4-benzoquinol during ubiquinone biosynthesis. The protein is 3-demethoxyubiquinol 3-hydroxylase of Francisella tularensis subsp. holarctica (strain FTNF002-00 / FTA).